Reading from the N-terminus, the 607-residue chain is V-type proton ATPase catalytic subunit A (607 aa).

251 to 258 (GAFGCGKT) provides a ligand contact to ATP.

The protein belongs to the ATPase alpha/beta chains family. As to quaternary structure, V-ATPase is a heteromultimeric enzyme composed of a peripheral catalytic V1 complex (components A to H) attached to an integral membrane V0 proton pore complex (components: a, c, c', c'', d, e, f and VOA1).

It is found in the vacuole membrane. The catalysed reaction is ATP + H2O + 4 H(+)(in) = ADP + phosphate + 5 H(+)(out). Functionally, catalytic subunit of the V1 complex of vacuolar(H+)-ATPase (V-ATPase), a multisubunit enzyme composed of a peripheral complex (V1) that hydrolyzes ATP and a membrane integral complex (V0) that translocates protons. V-ATPase is responsible for acidifying and maintaining the pH of intracellular compartments. In Encephalitozoon cuniculi (strain GB-M1) (Microsporidian parasite), this protein is V-type proton ATPase catalytic subunit A (VMA1).